A 674-amino-acid polypeptide reads, in one-letter code: Ribonuclease E (674 aa).

Residues 35–117 enclose the S1 motif domain; sequence GDIYLGLVDN…LTGNISMPGR (83 aa). Residues aspartate 296 and aspartate 339 each contribute to the Mg(2+) site. Zn(2+)-binding residues include cysteine 397 and cysteine 400. Disordered stretches follow at residues 458 to 529 and 626 to 674; these read PLDL…RRVE and QPRE…SSAE. Composition is skewed to basic and acidic residues over residues 484-493 and 509-529; these read GSEFSEKENI and TKEK…RRVE. The segment covering 663-674 has biased composition (basic residues); it reads RPGRRRRRSSAE. The C4 Arg-rich motif, probably responsible for interaction with PNPase motif lies at 665-673; sequence GRRRRRSSA.

The protein belongs to the RNase E/G family. As to quaternary structure, fractionates in a 250-300 kDa region, which is too small to be the equivalent of an RNA degradosome, as occurs with E.coli RNase E. Interacts with polynucleotide phosphorylase (PNPase, pnp), probably via the C4 Arg-rich motif (residues 665-673). The cofactor is Mg(2+).

The protein localises to the cytoplasm. The protein resides in the cell inner membrane. The enzyme catalyses Endonucleolytic cleavage of single-stranded RNA in A- and U-rich regions.. Endoribonuclease that plays a central role in rRNA processing and mRNA decay, and probably tRNA processing. Acts on 9S rRNA (the precursor of 5S rRNA) and RNAI, a molecule that controls the replication of ColE1 plasmid. Upon expression in E.coli does not purify with endogenous degradosome proteins. Prefers 5'-monophosphorylated substrates over 5'-triphosphorylated substrates. Complements an rne temperature-sensitive mutation in E.coli, despite being considerably shorter and not able to interact with the E.coli degradosome. Cleaves AU-rich sequences in vitro, tested with psbA2 mRNA. Complements both an rne temperature-sensitive mutation and an rng deletion in E.coli. Acts in the degradation of psaL mRNA in the presence but not the absence of the sRNA PsrR1. Cleaves the rimO-crhR transcript, contributing to the very short half-life of rimO mRNA. In terms of biological role, mRNA for psbA2, one of the core proteins in photosystem II, is degraded in the dark under control of a cis-acting AU-rich box in its 5'-UTR. RNase E cuts in this box, suggesting it is involved in this dark-induced mRNA instability. Functionally, CRISPR (clustered regularly interspaced short palindromic repeat) is an adaptive immune system that provides protection against mobile genetic elements (viruses, transposable elements and conjugative plasmids). CRISPR clusters contain spacers, sequences complementary to antecedent mobile elements, and target invading nucleic acids. CRISPR clusters are transcribed and processed into CRISPR RNA (crRNA). Endogenous RNase E is required for correct processing of pre-crRNA for the CRISPR3 subtype III-B system in this genome (genes sll7080 to sll7095). This CRISPR3 system does not include a cas6 gene, which is the usual RNase involved in crRNA maturation. The protein is Ribonuclease E of Synechocystis sp. (strain ATCC 27184 / PCC 6803 / Kazusa).